The chain runs to 332 residues: T-cell surface glycoprotein CD1b2 (332 aa).

The N-terminal stretch at 1-17 (MLLLVLALLAVLFPAGD) is a signal peptide. Residues 18 to 301 (TQDAFPEPIS…ILYWGNSSIG (284 aa)) are Extracellular-facing. N-linked (GlcNAc...) asparagine glycosylation is found at asparagine 38, asparagine 75, and asparagine 146. Cystine bridges form between cysteine 120–cysteine 184, cysteine 149–cysteine 163, and cysteine 224–cysteine 279. Residues 185–295 (PRYLMSVLEA…LGGQDIILYW (111 aa)) enclose the Ig-like domain. N-linked (GlcNAc...) asparagine glycosylation occurs at asparagine 297. A helical transmembrane segment spans residues 302-322 (WIILAVFVSCLIVLLFYVLWF). The Cytoplasmic segment spans residues 323-332 (YKHWSYQDIL). The short motif at 328-331 (YQDI) is the Internalization signal element.

Heterodimer with B2M (beta-2-microglobulin). Interacts with saposin C.

The protein resides in the cell membrane. It is found in the endosome membrane. The protein localises to the lysosome membrane. In terms of biological role, antigen-presenting protein that binds self and non-self lipid and glycolipid antigens and presents them to T-cell receptors on natural killer T-cells. In Cavia porcellus (Guinea pig), this protein is T-cell surface glycoprotein CD1b2 (CD1B2).